Reading from the N-terminus, the 724-residue chain is Phenylalanine ammonia-lyase (724 aa).

Tyr-91 serves as the catalytic Proton donor/acceptor. Residues 205 to 207 constitute a cross-link (5-imidazolinone (Ala-Gly)); sequence ASG. Ser-206 carries the post-translational modification 2,3-didehydroalanine (Ser). Positions 265, 357, 363, 393, 467, 495, and 498 each coordinate (E)-cinnamate.

Belongs to the PAL/histidase family. Homotetramer. Contains an active site 4-methylidene-imidazol-5-one (MIO), which is formed autocatalytically by cyclization and dehydration of residues Ala-Ser-Gly.

It localises to the cytoplasm. It catalyses the reaction L-phenylalanine = (E)-cinnamate + NH4(+). It functions in the pathway phenylpropanoid metabolism; trans-cinnamate biosynthesis; trans-cinnamate from L-phenylalanine: step 1/1. Functionally, catalyzes the non-oxidative deamination of L-phenylalanine to form trans-cinnamic acid and a free ammonium ion. Facilitates the commitment step in phenylpropanoid pathways that produce secondary metabolites such as lignins, coumarins and flavonoids. This Mycosarcoma maydis (Corn smut fungus) protein is Phenylalanine ammonia-lyase (PAL1).